A 590-amino-acid chain; its full sequence is Synaptotagmin-3 (590 aa).

Residues Met1–Ser54 are Vesicular-facing. The interval Cys10–Gln34 is cysteine motif. A helical transmembrane segment spans residues Leu55 to Ser75. Topologically, residues Trp76 to Glu590 are cytoplasmic. 3 disordered regions span residues Ala143–Leu220, Thr234–Gly260, and Glu273–Gly295. Over residues Ser185–Pro203 the composition is skewed to low complexity. The segment covering Thr234 to Asp243 has biased composition (polar residues). Positions Thr278 to Gly295 are enriched in gly residues. Arg284 carries the omega-N-methylarginine modification. 2 consecutive C2 domains span residues Pro299–Arg420 and Asp431–His565. Residues Asp330, Asp336, Asp388, Phe389, Asp390, Ser393, Asp396, Asp462, Asp468, Asp522, and Asp524 each coordinate Ca(2+).

It belongs to the synaptotagmin family. As to quaternary structure, homodimer; disulfide-linked via the cysteine motif. Can also form heterodimers with SYT6, SYT9 and SYT10. Requires Ca(2+) as cofactor. As to expression, expressed in melanocytes.

It is found in the cell membrane. The protein localises to the cytoplasmic vesicle. It localises to the secretory vesicle membrane. Its function is as follows. Ca(2+) sensor involved in Ca(2+)-dependent exocytosis of secretory vesicles through Ca(2+) and phospholipid binding to the C2 domain. Ca(2+) induces binding of the C2-domains to phospholipid membranes and to assembled SNARE-complexes; both actions contribute to triggering exocytosis. Plays a role in dendrite formation by melanocytes. The polypeptide is Synaptotagmin-3 (SYT3) (Homo sapiens (Human)).